The following is a 108-amino-acid chain: Monothiol bacilliredoxin BrxC (108 aa).

The residue at position 31 (Cys-31) is an S-bacillithiol cysteine disulfide.

Interacts with AbrB, BdhA, Bdr, BrxB, FolD, GapA, GapB, GatA, PfkA, PyrAA, PyrAB, PyrE, PyrG, PyrH, RpsB, RpsK, RpsL, SalA, SucC, Tuf and YtsJ. Cys can react with bacillithiol (BSH) to form mixed disulfides. S-bacillithiolation protects Cys residues against overoxidation by acting as a redox switch in response to oxidative stress.

In terms of biological role, S-bacillithiolation is the formation of mixed disulfide bonds between protein thiols and the general thiol reductant bacillithiol (BSH) under oxidative stress. BSH is an equivalent of glutathione (GSH) in Firmicutes. This protein is a monothiol bacilliredoxin, which debacillithiolates (removes BSH) the S-bacillithiolated glyceraldehyde-3-phosphate dehydrogenases (GAPDHs) GapA and GapB in vivo and probably a number of other oxidized cytosolic proteins. Debacillithiolates the S-bacillithiolated Bdr (Bdr-SSB) and BrxB (BrxB-SSB) in vitro. Involved in maintaining redox homeostasis in response to disulfide stress conditions. The polypeptide is Monothiol bacilliredoxin BrxC (Bacillus subtilis (strain 168)).